Consider the following 856-residue polypeptide: MAP kinase phosphatase with leucine-rich repeats protein 3 (856 aa).

Over residues 1–10 (MGNSHSSENG) the composition is skewed to low complexity. Disordered regions lie at residues 1 to 24 (MGNS…GGGS), 84 to 195 (VKKN…SSVL), and 214 to 326 (DDNS…NAKD). Gly2 carries the N-myristoyl glycine lipid modification. The span at 11-24 (GNSGSGGGSGGGGS) shows a compositional bias: gly residues. Over residues 90 to 142 (NSSNNNSNNNSNNNNNNNTLNNSTIITTTTTTTTTSTPTTTIMITPPQQQQQQ) the composition is skewed to low complexity. Positions 155 to 165 (ESSTPNEQQIR) are enriched in polar residues. Composition is skewed to low complexity over residues 178–195 (ESSF…SSVL) and 224–243 (QQQQ…QQTQ). Polar residues-rich tracts occupy residues 254–265 (IVNNKSSSTTNI) and 272–281 (AQTSRSTSIP). Residues 306–323 (NSLSSSNIITPNNTTNTN) show a composition bias toward low complexity. 8 LRR repeats span residues 344–365 (KIFS…ILSI), 370–391 (EIQE…QLVK), 392–413 (SLTT…VFIE), 416–437 (SLTS…IDQI), 439–461 (NLKY…SNLS), 462–484 (QLIS…DDLI), 485–506 (NLRM…RKLV), and 507–528 (NLVT…FAYL). Residues 554 to 577 (NINSNNNDSNNSNNNNNNNNDNNN) are disordered. The Tyrosine-protein phosphatase domain maps to 632–773 (IPSEIIPGIF…LLKYEAKLFC (142 aa)). Cys717 (phosphocysteine intermediate) is an active-site residue. The tract at residues 810-856 (INNSSNSNNNNSTDNSNNSSTSTTPNLSSLSSDSSSSASLSKLSISK) is disordered.

This sequence belongs to the protein-tyrosine phosphatase family. Non-receptor class dual specificity subfamily.

It carries out the reaction O-phospho-L-tyrosyl-[protein] + H2O = L-tyrosyl-[protein] + phosphate. The catalysed reaction is O-phospho-L-seryl-[protein] + H2O = L-seryl-[protein] + phosphate. It catalyses the reaction O-phospho-L-threonyl-[protein] + H2O = L-threonyl-[protein] + phosphate. Probable phosphatase with dual specificity toward Ser/Thr and Tyr-containing proteins. This chain is MAP kinase phosphatase with leucine-rich repeats protein 3 (mpl3), found in Dictyostelium discoideum (Social amoeba).